A 200-amino-acid chain; its full sequence is uncharacterized protein (200 aa).

Residues 7–29 (FFFLFSFISHAMMLTGLIGSSSF) form a helical membrane-spanning segment.

The protein localises to the membrane. This is an uncharacterized protein from Saccharomyces cerevisiae (strain ATCC 204508 / S288c) (Baker's yeast).